We begin with the raw amino-acid sequence, 293 residues long: Elongation factor Ts (293 aa).

The tract at residues 80–83 (TDFV) is involved in Mg(2+) ion dislocation from EF-Tu.

It belongs to the EF-Ts family.

The protein localises to the cytoplasm. Functionally, associates with the EF-Tu.GDP complex and induces the exchange of GDP to GTP. It remains bound to the aminoacyl-tRNA.EF-Tu.GTP complex up to the GTP hydrolysis stage on the ribosome. This is Elongation factor Ts from Paraburkholderia phymatum (strain DSM 17167 / CIP 108236 / LMG 21445 / STM815) (Burkholderia phymatum).